Reading from the N-terminus, the 266-residue chain is Phosphatidylserine decarboxylase proenzyme (266 aa).

Residues D74, H135, and S237 each act as charge relay system; for autoendoproteolytic cleavage activity in the active site. Catalysis depends on S237, which acts as the Schiff-base intermediate with substrate; via pyruvic acid; for decarboxylase activity. S237 is subject to Pyruvic acid (Ser); by autocatalysis.

This sequence belongs to the phosphatidylserine decarboxylase family. PSD-B subfamily. Prokaryotic type I sub-subfamily. Heterodimer of a large membrane-associated beta subunit and a small pyruvoyl-containing alpha subunit. Requires pyruvate as cofactor. In terms of processing, is synthesized initially as an inactive proenzyme. Formation of the active enzyme involves a self-maturation process in which the active site pyruvoyl group is generated from an internal serine residue via an autocatalytic post-translational modification. Two non-identical subunits are generated from the proenzyme in this reaction, and the pyruvate is formed at the N-terminus of the alpha chain, which is derived from the carboxyl end of the proenzyme. The autoendoproteolytic cleavage occurs by a canonical serine protease mechanism, in which the side chain hydroxyl group of the serine supplies its oxygen atom to form the C-terminus of the beta chain, while the remainder of the serine residue undergoes an oxidative deamination to produce ammonia and the pyruvoyl prosthetic group on the alpha chain. During this reaction, the Ser that is part of the protease active site of the proenzyme becomes the pyruvoyl prosthetic group, which constitutes an essential element of the active site of the mature decarboxylase.

The protein resides in the cell membrane. The catalysed reaction is a 1,2-diacyl-sn-glycero-3-phospho-L-serine + H(+) = a 1,2-diacyl-sn-glycero-3-phosphoethanolamine + CO2. It functions in the pathway phospholipid metabolism; phosphatidylethanolamine biosynthesis; phosphatidylethanolamine from CDP-diacylglycerol: step 2/2. Catalyzes the formation of phosphatidylethanolamine (PtdEtn) from phosphatidylserine (PtdSer). This is Phosphatidylserine decarboxylase proenzyme from Campylobacter jejuni subsp. jejuni serotype O:2 (strain ATCC 700819 / NCTC 11168).